We begin with the raw amino-acid sequence, 480 residues long: UDP-glycosyltransferase 72B1 (480 aa).

His-19 functions as the Proton acceptor in the catalytic mechanism. Asp-117 acts as the Charge relay in catalysis. UDP-binding residues include Ser-277, Trp-346, Ala-347, and His-364. Ser-277, Trp-346, Ala-347, His-364, Trp-367, Asn-368, Ser-369, Glu-372, Tyr-386, Glu-388, and Gln-389 together coordinate UDP-alpha-D-glucose. Residues Asn-368, Ser-369, Glu-372, and Tyr-386 each coordinate UDP.

Belongs to the UDP-glycosyltransferase family.

The enzyme catalyses hydroquinone + UDP-alpha-D-glucose = hydroquinone O-beta-D-glucopyranoside + UDP + H(+). Functionally, bifunctional O-glycosyltransferase and N-glycosyltransferase that can detoxify xenobiotics. Possesses high activity to metabolize the persistent pollutants 2,4,5-trichlorophenol (TCP) and 3,4-dichloroaniline (DCA). Also active on benzoates and benzoate derivatives in vitro. The sequence is that of UDP-glycosyltransferase 72B1 (UGT72B1) from Arabidopsis thaliana (Mouse-ear cress).